The sequence spans 149 residues: Large ribosomal subunit protein bL20m (149 aa).

A mitochondrion-targeting transit peptide spans 1-9 (MVFLSAPLW).

Belongs to the bacterial ribosomal protein bL20 family. As to quaternary structure, component of the mitochondrial ribosome large subunit (39S) which comprises a 16S rRNA and about 50 distinct proteins. Interacts with OXA1L.

The protein localises to the mitochondrion. This chain is Large ribosomal subunit protein bL20m (MRPL20), found in Bos taurus (Bovine).